Reading from the N-terminus, the 87-residue chain is Keratin-associated protein 19-3 (87 aa).

Positions 9–82 (GGLGYGYGSF…RRPSCCGGYG (74 aa)) are 23 X 2 AA repeats of G-[YCGS].

Belongs to the KRTAP type 19 family. Interacts with hair keratins. As to expression, strong expression in narrowly defined pattern restricted to the lower and middle cortical regions of the hair shaft in both developing and cycling hair. During hair follicle regression (catagen), expression levels decrease until expression is no longer detectable in follicles at resting stage (telogen).

Functionally, in the hair cortex, hair keratin intermediate filaments are embedded in an interfilamentous matrix, consisting of hair keratin-associated proteins (KRTAP), which are essential for the formation of a rigid and resistant hair shaft through their extensive disulfide bond cross-linking with abundant cysteine residues of hair keratins. The matrix proteins include the high-sulfur and high-glycine-tyrosine keratins. The sequence is that of Keratin-associated protein 19-3 (Krtap19-3) from Mus musculus (Mouse).